A 369-amino-acid polypeptide reads, in one-letter code: GTPase Obg (369 aa).

The 159-residue stretch at 1–159 (MKFIDEAKIE…RELRLELKVL (159 aa)) folds into the Obg domain. Residues 128-148 (IHFKSSTNRAPRQKSEGKEGE) are disordered. The OBG-type G domain maps to 160-333 (ADIGLLGMPN…LVTEIYDYIA (174 aa)). GTP is bound by residues 166–173 (GMPNAGKS), 191–195 (FTTLH), 213–216 (DIPG), 283–286 (NKLD), and 314–316 (SAL). Positions 173 and 193 each coordinate Mg(2+).

The protein belongs to the TRAFAC class OBG-HflX-like GTPase superfamily. OBG GTPase family. In terms of assembly, monomer. The cofactor is Mg(2+).

Its subcellular location is the cytoplasm. In terms of biological role, an essential GTPase which binds GTP, GDP and possibly (p)ppGpp with moderate affinity, with high nucleotide exchange rates and a fairly low GTP hydrolysis rate. Plays a role in control of the cell cycle, stress response, ribosome biogenesis and in those bacteria that undergo differentiation, in morphogenesis control. The sequence is that of GTPase Obg from Herminiimonas arsenicoxydans.